Consider the following 640-residue polypeptide: 1-deoxy-D-xylulose-5-phosphate synthase (640 aa).

Thiamine diphosphate contacts are provided by residues His75 and Gly117–Ala119. Mg(2+) is bound at residue Asp146. Residues Ala147 to Ala148, Asn175, and Glu370 contribute to the thiamine diphosphate site. Asn175 is a binding site for Mg(2+).

It belongs to the transketolase family. DXPS subfamily. In terms of assembly, homodimer. The cofactor is Mg(2+). Requires thiamine diphosphate as cofactor.

It carries out the reaction D-glyceraldehyde 3-phosphate + pyruvate + H(+) = 1-deoxy-D-xylulose 5-phosphate + CO2. Its pathway is metabolic intermediate biosynthesis; 1-deoxy-D-xylulose 5-phosphate biosynthesis; 1-deoxy-D-xylulose 5-phosphate from D-glyceraldehyde 3-phosphate and pyruvate: step 1/1. In terms of biological role, catalyzes the acyloin condensation reaction between C atoms 2 and 3 of pyruvate and glyceraldehyde 3-phosphate to yield 1-deoxy-D-xylulose-5-phosphate (DXP). This is 1-deoxy-D-xylulose-5-phosphate synthase from Chlamydia trachomatis serovar D (strain ATCC VR-885 / DSM 19411 / UW-3/Cx).